The primary structure comprises 657 residues: Endoplasmic reticulum mannosyl-oligosaccharide 1,2-alpha-mannosidase (657 aa).

At 1 to 49 (MYPPPPAPAPHRDFISVTLSLGESYDNSKSRRRRSCWRKWKQLSRLQRN) the chain is on the cytoplasmic side. A helical membrane pass occupies residues 50–70 (VILFVLGFLILCGFLYSLQVS). The Lumenal portion of the chain corresponds to 71 to 657 (DQWKALSGSR…AHPLPIWSPA (587 aa)). The residue at position 101 (Ser101) is a Phosphoserine. A disordered region spans residues 118 to 157 (HLRRGPPHLQIRPPNTVSKDGMQDDAKEREAALGKAQQEE). The span at 138–157 (GMQDDAKEREAALGKAQQEE) shows a compositional bias: basic and acidic residues. The Proton donor role is filled by Glu288. Residue Asp421 is part of the active site. Cys485 and Cys514 form a disulfide bridge. Glu528 functions as the Proton donor in the catalytic mechanism. Glu557 is an active-site residue. Ca(2+) is bound at residue Thr646.

This sequence belongs to the glycosyl hydrolase 47 family. Ca(2+) is required as a cofactor.

The protein resides in the endoplasmic reticulum membrane. It catalyses the reaction N(4)-(alpha-D-Man-(1-&gt;2)-alpha-D-Man-(1-&gt;2)-alpha-D-Man-(1-&gt;3)-[alpha-D-Man-(1-&gt;2)-alpha-D-Man-(1-&gt;3)-[alpha-D-Man-(1-&gt;2)-alpha-D-Man-(1-&gt;6)]-alpha-D-Man-(1-&gt;6)]-beta-D-Man-(1-&gt;4)-beta-D-GlcNAc-(1-&gt;4)-beta-D-GlcNAc)-L-asparaginyl-[protein] (N-glucan mannose isomer 9A1,2,3B1,2,3) + 4 H2O = N(4)-(alpha-D-Man-(1-&gt;3)-[alpha-D-Man-(1-&gt;3)-[alpha-D-Man-(1-&gt;6)]-alpha-D-Man-(1-&gt;6)]-beta-D-Man-(1-&gt;4)-beta-D-GlcNAc-(1-&gt;4)-beta-D-GlcNAc)-L-asparaginyl-[protein] (N-glucan mannose isomer 5A1,2) + 4 beta-D-mannose. The enzyme catalyses N(4)-(alpha-D-Man-(1-&gt;2)-alpha-D-Man-(1-&gt;2)-alpha-D-Man-(1-&gt;3)-[alpha-D-Man-(1-&gt;3)-[alpha-D-Man-(1-&gt;2)-alpha-D-Man-(1-&gt;6)]-alpha-D-Man-(1-&gt;6)]-beta-D-Man-(1-&gt;4)-beta-D-GlcNAc-(1-&gt;4)-beta-D-GlcNAc)-L-asparaginyl-[protein] (N-glucan mannose isomer 8A1,2,3B1,3) + 3 H2O = N(4)-(alpha-D-Man-(1-&gt;3)-[alpha-D-Man-(1-&gt;3)-[alpha-D-Man-(1-&gt;6)]-alpha-D-Man-(1-&gt;6)]-beta-D-Man-(1-&gt;4)-beta-D-GlcNAc-(1-&gt;4)-beta-D-GlcNAc)-L-asparaginyl-[protein] (N-glucan mannose isomer 5A1,2) + 3 beta-D-mannose. Its pathway is protein modification; protein glycosylation. Its function is as follows. Involved in glycoprotein quality control targeting of misfolded glycoproteins for degradation. It primarily trims a single alpha-1,2-linked mannose residue from Man(9)GlcNAc(2) to produce Man(8)GlcNAc(2), but at high enzyme concentrations, as found in the ER quality control compartment (ERQC), it further trims the carbohydrates to Man(5-6)GlcNAc(2). This chain is Endoplasmic reticulum mannosyl-oligosaccharide 1,2-alpha-mannosidase (Man1b1), found in Rattus norvegicus (Rat).